Consider the following 180-residue polypeptide: Small ribosomal subunit protein uS5 (180 aa).

Residues 13-76 enclose the S5 DRBM domain; sequence LEERVVQINR…EAAKKNLIRV (64 aa).

It belongs to the universal ribosomal protein uS5 family. In terms of assembly, part of the 30S ribosomal subunit. Contacts proteins S4 and S8.

Functionally, with S4 and S12 plays an important role in translational accuracy. Its function is as follows. Located at the back of the 30S subunit body where it stabilizes the conformation of the head with respect to the body. The protein is Small ribosomal subunit protein uS5 of Roseiflexus sp. (strain RS-1).